Here is a 416-residue protein sequence, read N- to C-terminus: UDP-N-acetylglucosamine 1-carboxyvinyltransferase (416 aa).

Position 22 to 23 (22 to 23 (KN)) interacts with phosphoenolpyruvate. Arg91 serves as a coordination point for UDP-N-acetyl-alpha-D-glucosamine. The active-site Proton donor is the Cys115. A 2-(S-cysteinyl)pyruvic acid O-phosphothioketal modification is found at Cys115. UDP-N-acetyl-alpha-D-glucosamine is bound by residues 120–124 (RPVDL), Asp303, and Ile325.

This sequence belongs to the EPSP synthase family. MurA subfamily.

It is found in the cytoplasm. It carries out the reaction phosphoenolpyruvate + UDP-N-acetyl-alpha-D-glucosamine = UDP-N-acetyl-3-O-(1-carboxyvinyl)-alpha-D-glucosamine + phosphate. The protein operates within cell wall biogenesis; peptidoglycan biosynthesis. Its function is as follows. Cell wall formation. Adds enolpyruvyl to UDP-N-acetylglucosamine. In Oleidesulfovibrio alaskensis (strain ATCC BAA-1058 / DSM 17464 / G20) (Desulfovibrio alaskensis), this protein is UDP-N-acetylglucosamine 1-carboxyvinyltransferase.